The primary structure comprises 621 residues: MBT domain-containing protein 1 (621 aa).

Over residues 1–21 (MEKTKDPADRSSRSERKRRDS) the composition is skewed to basic and acidic residues. The disordered stretch occupies residues 1–55 (MEKTKDPADRSSRSERKRRDSFGMFDGYDSCSEDTSSSSSSDESEEEVAPLPSSL). Over residues 29–41 (DSCSEDTSSSSSS) the composition is skewed to low complexity. The segment at 68–103 (PDGKSGMATCEMCGMVGVRDAFYSKTKRFCSVSCSR) adopts an FCS-type zinc-finger fold. Residues Cys-77, Cys-80, Cys-97, and Cys-101 each contribute to the Zn(2+) site. MBT repeat units follow at residues 164–268 (FSWG…LVPP), 276–373 (TNWK…IGHR), 374–479 (FKRT…LTPP), and 487–583 (FKWF…LQPP). Residues 581–621 (QPPAPQSNKDGQSNVSKQKKKSKSQPYKGHKKNFRKPGNRP) form a disordered region. A compositionally biased stretch (basic residues) spans 597–621 (KQKKKSKSQPYKGHKKNFRKPGNRP).

As to quaternary structure, monomer. Component of the NuA4 histone acetyltransferase complex.

It localises to the nucleus. The protein resides in the chromosome. Chromatin reader component of the NuA4 histone acetyltransferase complex, a multiprotein complex involved in transcriptional activation of select genes principally by acetylation of nucleosomal histones H4 and H2A. The NuA4 complex plays a direct role in repair of DNA double-strand breaks (DSBs) by promoting homologous recombination (HR). MBTD1 specifically recognizes and binds monomethylated and dimethylated 'Lys-20' on histone H4 (H4K20me1 and H4K20me2, respectively). In the NuA4 complex, MBTD1 promotes recruitment of the complex to H4K20me marks by competing with TP53BP1 for binding to H4K20me. Following recruitment to H4K20me at DNA breaks, the NuA4 complex catalyzes acetylation of 'Lys-15' on histone H2A (H2AK15), blocking the ubiquitination mark required for TP53BP1 localization at DNA breaks, thereby promoting homologous recombination (HR). The chain is MBT domain-containing protein 1 from Xenopus laevis (African clawed frog).